The sequence spans 34 residues: uncharacterized protein (34 aa).

Over residues 1–12 the composition is skewed to basic and acidic residues; sequence MFSHFEVSENRP. Residues 1 to 21 form a disordered region; the sequence is MFSHFEVSENRPRKQPRRKRI.

This is an uncharacterized protein from Saccharomyces cerevisiae (strain ATCC 204508 / S288c) (Baker's yeast).